A 339-amino-acid polypeptide reads, in one-letter code: Phosphatidylglycerol--prolipoprotein diacylglyceryl transferase (339 aa).

Transmembrane regions (helical) follow at residues 43–63 (FTIA…YWLG), 81–101 (ILWM…LTSW), and 121–141 (NGGI…IYFA). Residue Arg167 participates in a 1,2-diacyl-sn-glycero-3-phospho-(1'-sn-glycerol) binding. Helical transmembrane passes span 231–251 (FTQL…YFWL) and 300–320 (LWTD…WMLW).

The protein belongs to the Lgt family.

It is found in the cell membrane. The catalysed reaction is L-cysteinyl-[prolipoprotein] + a 1,2-diacyl-sn-glycero-3-phospho-(1'-sn-glycerol) = an S-1,2-diacyl-sn-glyceryl-L-cysteinyl-[prolipoprotein] + sn-glycerol 1-phosphate + H(+). Its pathway is protein modification; lipoprotein biosynthesis (diacylglyceryl transfer). Its function is as follows. Catalyzes the transfer of the diacylglyceryl group from phosphatidylglycerol to the sulfhydryl group of the N-terminal cysteine of a prolipoprotein, the first step in the formation of mature lipoproteins. The sequence is that of Phosphatidylglycerol--prolipoprotein diacylglyceryl transferase from Deinococcus radiodurans (strain ATCC 13939 / DSM 20539 / JCM 16871 / CCUG 27074 / LMG 4051 / NBRC 15346 / NCIMB 9279 / VKM B-1422 / R1).